The primary structure comprises 238 residues: Ribonuclease PH (238 aa).

Residues R86 and 124 to 126 each bind phosphate; that span reads GTR.

It belongs to the RNase PH family. Homohexameric ring arranged as a trimer of dimers.

It carries out the reaction tRNA(n+1) + phosphate = tRNA(n) + a ribonucleoside 5'-diphosphate. Its function is as follows. Phosphorolytic 3'-5' exoribonuclease that plays an important role in tRNA 3'-end maturation. Removes nucleotide residues following the 3'-CCA terminus of tRNAs; can also add nucleotides to the ends of RNA molecules by using nucleoside diphosphates as substrates, but this may not be physiologically important. Probably plays a role in initiation of 16S rRNA degradation (leading to ribosome degradation) during starvation. The sequence is that of Ribonuclease PH from Parvibaculum lavamentivorans (strain DS-1 / DSM 13023 / NCIMB 13966).